Reading from the N-terminus, the 355-residue chain is UDP-N-acetylglucosamine--N-acetylmuramyl-(pentapeptide) pyrophosphoryl-undecaprenol N-acetylglucosamine transferase (355 aa).

UDP-N-acetyl-alpha-D-glucosamine is bound by residues 15–17, asparagine 127, arginine 163, serine 191, isoleucine 245, 264–269, and glutamine 289; these read TGG and ALTVSE.

It belongs to the glycosyltransferase 28 family. MurG subfamily.

Its subcellular location is the cell inner membrane. It catalyses the reaction di-trans,octa-cis-undecaprenyl diphospho-N-acetyl-alpha-D-muramoyl-L-alanyl-D-glutamyl-meso-2,6-diaminopimeloyl-D-alanyl-D-alanine + UDP-N-acetyl-alpha-D-glucosamine = di-trans,octa-cis-undecaprenyl diphospho-[N-acetyl-alpha-D-glucosaminyl-(1-&gt;4)]-N-acetyl-alpha-D-muramoyl-L-alanyl-D-glutamyl-meso-2,6-diaminopimeloyl-D-alanyl-D-alanine + UDP + H(+). The protein operates within cell wall biogenesis; peptidoglycan biosynthesis. Functionally, cell wall formation. Catalyzes the transfer of a GlcNAc subunit on undecaprenyl-pyrophosphoryl-MurNAc-pentapeptide (lipid intermediate I) to form undecaprenyl-pyrophosphoryl-MurNAc-(pentapeptide)GlcNAc (lipid intermediate II). This chain is UDP-N-acetylglucosamine--N-acetylmuramyl-(pentapeptide) pyrophosphoryl-undecaprenol N-acetylglucosamine transferase, found in Yersinia enterocolitica serotype O:8 / biotype 1B (strain NCTC 13174 / 8081).